Consider the following 288-residue polypeptide: Cyclin-dependent kinase 2 homolog (288 aa).

In terms of domain architecture, Protein kinase spans 4–284 (YHGLEKIGEG…AKQAIEHPYF (281 aa)). Residues 10-18 (IGEGTYGVV) and Lys32 each bind ATP. Residue Thr14 is modified to Phosphothreonine. Tyr15 bears the Phosphotyrosine mark. Asp125 serves as the catalytic Proton acceptor. Thr158 bears the Phosphothreonine mark.

The protein belongs to the protein kinase superfamily. CMGC Ser/Thr protein kinase family. CDC2/CDKX subfamily. As to quaternary structure, may form a complex composed of at least the catalytic subunit CRK2 and a cyclin. Mg(2+) is required as a cofactor.

It is found in the cytoplasm. The enzyme catalyses L-seryl-[protein] + ATP = O-phospho-L-seryl-[protein] + ADP + H(+). It catalyses the reaction L-threonyl-[protein] + ATP = O-phospho-L-threonyl-[protein] + ADP + H(+). It carries out the reaction [DNA-directed RNA polymerase] + ATP = phospho-[DNA-directed RNA polymerase] + ADP + H(+). Phosphorylation at Thr-14 or Tyr-15 inactivates the enzyme, while phosphorylation at Thr-158 activates it. In terms of biological role, serine/threonine-protein kinase. Involved in the control of the cell cycle. Required for entry into S-phase and mitosis. Probable component of the kinase complex that phosphorylates the repetitive C-terminus of RNA polymerase II. The polypeptide is Cyclin-dependent kinase 2 homolog (Plasmodium berghei (strain Anka)).